The sequence spans 394 residues: Elongation factor Tu (394 aa).

The tr-type G domain maps to Lys-10 to Glu-205. Residues Gly-19–Thr-26 form a G1 region. GTP is bound at residue Gly-19 to Thr-26. Residue Thr-26 participates in Mg(2+) binding. The G2 stretch occupies residues Gly-61–Asn-65. Positions Asp-82–Gly-85 are G3. GTP-binding positions include Asp-82–His-86 and Asn-137–Asp-140. The segment at Asn-137–Asp-140 is G4. The segment at Ser-173–Phe-175 is G5.

Belongs to the TRAFAC class translation factor GTPase superfamily. Classic translation factor GTPase family. EF-Tu/EF-1A subfamily. In terms of assembly, monomer.

Its subcellular location is the cytoplasm. It catalyses the reaction GTP + H2O = GDP + phosphate + H(+). Its function is as follows. GTP hydrolase that promotes the GTP-dependent binding of aminoacyl-tRNA to the A-site of ribosomes during protein biosynthesis. In Borrelia hermsii (strain HS1 / DAH), this protein is Elongation factor Tu.